The following is a 377-amino-acid chain: MSQTPLSPPPVGGRVVVAMSGGVDSSVTAALLKEQGHDVVGLTMRLYDHGKPLGPGARTCCAGQDIHDARRVADRLGIAHYVLDYESRFREDVIEPFAASYGRGETPIPCVLCNQTVKFRDLLAAALDLGGTALATGHYVRRLDGPEGPRLYRAVDPGRDQSYFLFATTKGQLGRLLFPLGAMASKDETRAIARRLGLAVGDKPDSQDICFVPDGDYAKVVERLRPGVVEAGEIVDLDGTVLGHHPGLIHFTVGQRRGVGIGGSAEPLYVIALDTATHRLVVGPHAALARREIAVSGLNWLGEGEGPASAGTRARIKIRHASPPFPGQIFPGAAAGEARVVLDEPAHGVAPGQAAVFYGLDDNDARVLGGGWIGASR.

Residues 18–25 and Met44 contribute to the ATP site; that span reads AMSGGVDS. Cys113 serves as the catalytic Nucleophile. A disulfide bridge connects residues Cys113 and Cys210. Position 137 (Gly137) interacts with ATP. An interaction with tRNA region spans residues 159-161; it reads RDQ. The active-site Cysteine persulfide intermediate is the Cys210.

Belongs to the MnmA/TRMU family.

The protein localises to the cytoplasm. It carries out the reaction S-sulfanyl-L-cysteinyl-[protein] + uridine(34) in tRNA + AH2 + ATP = 2-thiouridine(34) in tRNA + L-cysteinyl-[protein] + A + AMP + diphosphate + H(+). Functionally, catalyzes the 2-thiolation of uridine at the wobble position (U34) of tRNA, leading to the formation of s(2)U34. This chain is tRNA-specific 2-thiouridylase MnmA, found in Rhodospirillum rubrum (strain ATCC 11170 / ATH 1.1.1 / DSM 467 / LMG 4362 / NCIMB 8255 / S1).